Here is a 257-residue protein sequence, read N- to C-terminus: Hydroxyacylglutathione hydrolase (257 aa).

The Zn(2+) site is built by His-54, His-56, Asp-58, His-59, His-113, Asp-137, and His-175.

The protein belongs to the metallo-beta-lactamase superfamily. Glyoxalase II family. In terms of assembly, monomer. The cofactor is Zn(2+).

It catalyses the reaction an S-(2-hydroxyacyl)glutathione + H2O = a 2-hydroxy carboxylate + glutathione + H(+). Its pathway is secondary metabolite metabolism; methylglyoxal degradation; (R)-lactate from methylglyoxal: step 2/2. Thiolesterase that catalyzes the hydrolysis of S-D-lactoyl-glutathione to form glutathione and D-lactic acid. The protein is Hydroxyacylglutathione hydrolase of Nostoc punctiforme (strain ATCC 29133 / PCC 73102).